Consider the following 372-residue polypeptide: N-methyl-L-tryptophan oxidase (372 aa).

Position 4 to 34 (4 to 34 (DLIIIGSGSVGAAAGYYATRAGLNVLMTDAH)) interacts with FAD. C308 carries the S-8alpha-FAD cysteine modification.

Belongs to the MSOX/MTOX family. MTOX subfamily. In terms of assembly, monomer. The cofactor is FAD.

The catalysed reaction is N(alpha)-methyl-L-tryptophan + O2 + H2O = L-tryptophan + formaldehyde + H2O2. Catalyzes the oxidative demethylation of N-methyl-L-tryptophan. The polypeptide is N-methyl-L-tryptophan oxidase (Escherichia coli O6:H1 (strain CFT073 / ATCC 700928 / UPEC)).